A 258-amino-acid polypeptide reads, in one-letter code: Shikimate dehydrogenase (NADP(+)) (258 aa).

Residues Ser14–Ser16 and Thr61 each bind shikimate. Lys65 (proton acceptor) is an active-site residue. Shikimate contacts are provided by Asn86 and Asp101. NADP(+)-binding positions include Gly125 to Ser129 and Leu211. Tyr213 provides a ligand contact to shikimate. Gly234 provides a ligand contact to NADP(+).

Belongs to the shikimate dehydrogenase family. In terms of assembly, homodimer.

The catalysed reaction is shikimate + NADP(+) = 3-dehydroshikimate + NADPH + H(+). It functions in the pathway metabolic intermediate biosynthesis; chorismate biosynthesis; chorismate from D-erythrose 4-phosphate and phosphoenolpyruvate: step 4/7. Its function is as follows. Involved in the biosynthesis of the chorismate, which leads to the biosynthesis of aromatic amino acids. Catalyzes the reversible NADPH linked reduction of 3-dehydroshikimate (DHSA) to yield shikimate (SA). This chain is Shikimate dehydrogenase (NADP(+)), found in Clostridium botulinum (strain 657 / Type Ba4).